Here is a 638-residue protein sequence, read N- to C-terminus: Probable inactive receptor kinase At4g23740 (638 aa).

The first 24 residues, 1–24 (MEALRIYLWSLCLSLCLIIYGANS), serve as a signal peptide directing secretion. 5 LRR repeats span residues 94–117 (ALRV…VELK), 118–139 (DLAF…DFSV), 142–165 (NLTS…SRLK), 166–188 (RIQS…SVLS), and 189–198 (SLQHIDLSNN). A helical transmembrane segment spans residues 257–277 (VFLLIVIAVSIVVITALAFVL). Residues 337–608 (RASAEVLGKG…SDLVRLIENV (272 aa)) enclose the Protein kinase domain. S339 is modified (phosphoserine). 343-351 (LGKGTFGTT) contributes to the ATP binding site. At T360 the chain carries Phosphothreonine. K365 contacts ATP. Phosphoserine occurs at positions 416 and 419. A phosphothreonine mark is found at T436 and T509. A Phosphoserine modification is found at S513. Positions 612–638 (RTSIEPEPELKPKSENGASETSTPSEI) are disordered. Over residues 613–625 (TSIEPEPELKPKS) the composition is skewed to basic and acidic residues. Polar residues predominate over residues 627–638 (NGASETSTPSEI).

The protein belongs to the protein kinase superfamily.

The protein localises to the membrane. The protein is Probable inactive receptor kinase At4g23740 of Arabidopsis thaliana (Mouse-ear cress).